We begin with the raw amino-acid sequence, 572 residues long: Isocitrate lyase (572 aa).

104–106 (SGW) is a binding site for substrate. Aspartate 175 contacts Mg(2+). Residue cysteine 213 is the Proton acceptor of the active site. Residues 214-215 (GH), arginine 250, 437-441 (NLSPS), and threonine 472 each bind substrate. Residues 550–572 (QFKGSWTGPGSESSSHVLAKSRM) form a disordered region. A Microbody targeting signal motif is present at residues 570–572 (SRM).

The protein belongs to the isocitrate lyase/PEP mutase superfamily. Isocitrate lyase family. Mg(2+) is required as a cofactor. As to expression, expressed in leaves.

The protein resides in the glyoxysome. The catalysed reaction is D-threo-isocitrate = glyoxylate + succinate. It functions in the pathway carbohydrate metabolism; glyoxylate cycle; (S)-malate from isocitrate: step 1/2. Its function is as follows. Involved in storage lipid mobilization during the growth of higher plant seedling. This chain is Isocitrate lyase, found in Oryza sativa subsp. japonica (Rice).